A 105-amino-acid chain; its full sequence is V-type ATP synthase subunit F (105 aa).

It belongs to the V-ATPase F subunit family.

Functionally, produces ATP from ADP in the presence of a proton gradient across the membrane. The chain is V-type ATP synthase subunit F from Fusobacterium nucleatum subsp. nucleatum (strain ATCC 25586 / DSM 15643 / BCRC 10681 / CIP 101130 / JCM 8532 / KCTC 2640 / LMG 13131 / VPI 4355).